The following is a 100-amino-acid chain: Large ribosomal subunit protein bL28 (100 aa).

The disordered stretch occupies residues 1-21 (MSRVCDITGQGKSFGNKVSHS). Over residues 10–19 (QGKSFGNKVS) the composition is skewed to polar residues.

It belongs to the bacterial ribosomal protein bL28 family.

The chain is Large ribosomal subunit protein bL28 from Ehrlichia canis (strain Jake).